The primary structure comprises 436 residues: EPS I polysaccharide export inner membrane protein EpsE (436 aa).

The next 12 helical transmembrane spans lie at 20–40, 49–69, 91–111, 132–152, 160–180, 184–204, 234–254, 261–281, 307–327, 341–361, 375–395, and 396–416; these read VLGL…NIML, FGLF…LATG, LCAF…ALYL, MAAI…FLYA, ASVS…MGPI, VVAL…QLVI, VLTT…LAAM, LALF…PATL, ALLF…LLAG, AAAS…SVLL, FAMA…ALRL, and GYGA…LILF.

It to E.coli bicyclomycin resistance protein (BCR).

It localises to the cell inner membrane. In terms of biological role, probably involved in polymerization and/or export of exopolysaccharide EPS I which functions as a virulence factor. May play a role in export of EPS I or its intermediates across the membranes. The protein is EPS I polysaccharide export inner membrane protein EpsE (epsE) of Ralstonia nicotianae (strain ATCC BAA-1114 / GMI1000) (Ralstonia solanacearum).